Consider the following 2139-residue polypeptide: Voltage-dependent L-type calcium channel subunit alpha-1C (2139 aa).

The interval 1 to 20 (MVNENTRMYVPEENHQGSNY) is disordered. Residues 1 to 124 (MVNENTRMYV…RACISIVEWK (124 aa)) lie on the Cytoplasmic side of the membrane. The interval 47-68 (GAALSWQAAIDAARQAKLMGSA) is calmodulin-binding. Positions 73–98 (ISTVSSTQRKRQQYGKPKKQGGTTAT) are disordered. The span at 80-91 (QRKRQQYGKPKK) shows a compositional bias: basic residues. Residues 111 to 408 (NPIRRACISI…LVLGVLSGEF (298 aa)) form an I repeat. The helical transmembrane segment at 125-143 (PFEIIILLTIFANCVALAI) threads the bilayer. Topologically, residues 144 to 158 (YIPFPEDDSNATNSN) are extracellular. A glycan (N-linked (GlcNAc...) asparagine) is linked at N153. A helical transmembrane segment spans residues 159-179 (LERVEYLFLIIFTVEAFLKVI). Residues 180–188 (AYGLLFHPN) lie on the Cytoplasmic side of the membrane. Residues 189–209 (AYLRNGWNLLDFIIVVVGLFS) form a helical membrane-spanning segment. Residues 210–232 (AILEQATKADGANALGGKGAGFD) lie on the Extracellular side of the membrane. The chain crosses the membrane as a helical span at residues 233-251 (VKALRAFRVLRPLRLVSGV). Over 252–268 (PSLQVVLNSIIKAMVPL) the chain is Cytoplasmic. The chain crosses the membrane as a helical span at residues 269–290 (LHIALLVLFVIIIYAIIGLELF). Residues 291–350 (MGKMHKTCYNQEGIIDVPAEEDPSPCALETGHGRQCQNGTVCKPGWDGPKHGITNFDNFA) lie on the Extracellular side of the membrane. 2 disulfides stabilise this stretch: C298/C326 and C316/C332. N-linked (GlcNAc...) asparagine glycosylation is present at N328. The segment at residues 351–372 (FAMLTVFQCITMEGWTDVLYWM) is an intramembrane region (pore-forming). A Selectivity filter of repeat I motif is present at residues 361–364 (TMEG). Position 363 (E363) interacts with Ca(2+). The Extracellular segment spans residues 373–380 (QDAMGYEL). A helical transmembrane segment spans residues 381–401 (PWVYFVSLVIFGSFFVLNLVL). At 402 to 524 (GVLSGEFSKE…RKCRAAVKSN (123 aa)) the chain is on the cytoplasmic side. Positions 428–445 (QQLEEDLKGYLDWITQAE) are AID/alpha-interaction domain; mediates interaction with the beta subunit. Residues 449 to 481 (PENEDEGMDEDKPRNMSMPTSETESVNTENVAG) are disordered. Residues 465 to 478 (SMPTSETESVNTEN) show a composition bias toward polar residues. S469 carries the phosphoserine modification. Residue T476 is modified to Phosphothreonine. The II repeat unit spans residues 510 to 756 (NRFCRRKCRA…VFLAIAVDNL (247 aa)). A helical transmembrane segment spans residues 525-543 (VFYWLVIFLVFLNTLTIAS). The Extracellular portion of the chain corresponds to 544 to 554 (EHYNQPHWLTE). The helical transmembrane segment at 555–575 (VQDTANKALLALFTAEMLLKM) threads the bilayer. Over 576–586 (YSLGLQAYFVS) the chain is Cytoplasmic. The helical transmembrane segment at 587 to 606 (LFNRFDCFIVCGGILETILV) threads the bilayer. The Extracellular segment spans residues 607–615 (ETKIMSPLG). Residues 616 to 634 (ISVLRCVRLLRIFKITRYW) form a helical membrane-spanning segment. The Cytoplasmic segment spans residues 635 to 653 (NSLSNLVASLLNSVRSIAS). Residues 654 to 673 (LLLLLFLFIIIFSLLGMQLF) traverse the membrane as a helical segment. The Extracellular segment spans residues 674-693 (GGKFNFDEMQTRRSTFDNFP). Residues 694-715 (QSLLTVFQILTGEDWNSVMYDG) constitute an intramembrane region (pore-forming). The Selectivity filter of repeat II signature appears at 704–707 (TGED). E706 lines the Ca(2+) pocket. At 716–725 (IMAYGGPSFP) the chain is on the extracellular side. A helical transmembrane segment spans residues 726 to 745 (GMLVCIYFIILFICGNYILL). The Cytoplasmic segment spans residues 746-900 (NVFLAIAVDN…LQCHRIVNDT (155 aa)). The tract at residues 764-861 (SAQKEEEEEK…EMPVGPRPRP (98 aa)) is disordered. Residues 783 to 806 (SPEKKQEVMEKPAVEESKEEKIEL) are compositionally biased toward basic and acidic residues. Residues S808 and S815 each carry the phosphoserine modification. An interaction with STAC2 region spans residues 829–876 (SENEDKSPHSNPDTAGEEDEEEPEMPVGPRPRPLSELHLKEKAVPMPE). Over residues 843–852 (AGEEDEEEPE) the composition is skewed to acidic residues. An III repeat occupies 887 to 1169 (NRFRLQCHRI…IFVGFVIVTF (283 aa)). Residues 901 to 919 (IFTNLILFFILLSSISLAA) traverse the membrane as a helical segment. Residues 920–931 (EDPVQHTSFRNH) lie on the Extracellular side of the membrane. A helical membrane pass occupies residues 932–951 (ILGNADYVFTSIFTLEIILK). At 952–967 (MTAYGAFLHKGSFCRN) the chain is on the cytoplasmic side. A helical transmembrane segment spans residues 968–986 (YFNILDLLVVSVSLISFGI). Topologically, residues 987-993 (QSSAINV) are extracellular. Residues 994 to 1012 (VKILRVLRVLRPLRAINRA) traverse the membrane as a helical segment. The Cytoplasmic portion of the chain corresponds to 1013–1031 (KGLKHVVQCVFVAIRTIGN). The helical transmembrane segment at 1032 to 1051 (IVIVTTLLQFMFACIGVQLF) threads the bilayer. Over 1052 to 1101 (KGKLYTCSDSSKQTEAECKGNYITYKDGEVDHPIIQPRSWENSKFDFDNV) the chain is Extracellular. A disulfide bridge links C1058 with C1069. The dihydropyridine binding stretch occupies residues 1089–1178 (RSWENSKFDF…FQEQGEQEYK (90 aa)). Positions 1102-1122 (LAAMMALFTVSTFEGWPELLY) form an intramembrane region, pore-forming. Residues 1113 to 1116 (TFEG) carry the Selectivity filter of repeat III motif. A Ca(2+)-binding site is contributed by E1115. Topologically, residues 1123–1139 (RSIDSHTEDKGPIYNYR) are extracellular. Residues 1140–1161 (VEISIFFIIYIIIIAFFMMNIF) form a helical membrane-spanning segment. The Cytoplasmic portion of the chain corresponds to 1162 to 1219 (VGFVIVTFQEQGEQEYKNCELDKNQRQCVEYALKARPLRRYIPKNQHQYKVWYVVNST). The IV repeat unit spans residues 1206 to 1479 (NQHQYKVWYV…LFVAVIMDNF (274 aa)). The chain crosses the membrane as a helical span at residues 1220–1241 (YFEYLMFVLILLNTICLAMQHY). At 1242-1249 (GQSCLFKI) the chain is on the extracellular side. The helical transmembrane segment at 1250 to 1271 (AMNILNMLFTGLFTVEMILKLI) threads the bilayer. At 1272-1281 (AFKPKGYFSD) the chain is on the cytoplasmic side. A helical transmembrane segment spans residues 1282 to 1301 (PWNVFDFLIVIGSIIDVILS). The Extracellular segment spans residues 1302-1324 (ETNPAEHTQCSPSMSAEENSRIS). The chain crosses the membrane as a helical span at residues 1325-1343 (ITFFRLFRVMRLVKLLSRG). Residues 1344-1361 (EGIRTLLWTFIKSFQALP) lie on the Cytoplasmic side of the membrane. A helical membrane pass occupies residues 1362–1382 (YVALLIVMLFFIYAVIGMQVF). Over 1383 to 1404 (GKIALNDTTEINRNNNFQTFPQ) the chain is Extracellular. A glycan (N-linked (GlcNAc...) asparagine) is linked at N1388. Residues 1405-1423 (AVLLLFRCATGEAWQDIML) constitute an intramembrane region (pore-forming). The short motif at 1414-1417 (TGEA) is the Selectivity filter of repeat IV element. Residues 1424–1451 (ACMPGKKCAPESEPSNSTEGETPCGSSF) are Extracellular-facing. The dihydropyridine binding stretch occupies residues 1430–1498 (KCAPESEPSN…LGPHHLDEFK (69 aa)). C1431 and C1447 form a disulfide bridge. A glycan (N-linked (GlcNAc...) asparagine) is linked at N1439. Residues 1444–1486 (ETPCGSSFAVFYFISFYMLCAFLIINLFVAVIMDNFDYLTRDW) are phenylalkylamine binding. The helical transmembrane segment at 1452 to 1476 (AVFYFISFYMLCAFLIINLFVAVIM) threads the bilayer. The Cytoplasmic portion of the chain corresponds to 1477–2139 (DNFDYLTRDW…ADSRSYVSNL (663 aa)). An important for interaction with STAC1, STAC2 and STAC3 region spans residues 1611–1638 (DEVTVGKFYATFLIQEYFRKFKKRKEQG). The segment at 1611-1644 (DEVTVGKFYATFLIQEYFRKFKKRKEQGLVGKPS) is calmodulin-binding. Residues 1617 to 1637 (KFYATFLIQEYFRKFKKRKEQ) are calmodulin-binding IQ region. Residues 1651 to 1670 (LQAGLRTLHDIGPEIRRAIS) form an important for localization in at the junctional membrane region. Phosphoserine occurs at positions 1670 and 1691. Composition is skewed to polar residues over residues 1732 to 1741 (KTGNNQADTE) and 1751 to 1763 (STFTPSSYSSTGS). Positions 1732-1773 (KTGNNQADTESPSHEKLVDSTFTPSSYSSTGSNANINNANNT) are disordered. Positions 1764 to 1773 (NANINNANNT) are enriched in low complexity. The residue at position 1897 (S1897) is a Phosphoserine; by PKA. The segment at 1940–1966 (RSHSPTTFPRPCPTPPVTPGSRGRPLR) is disordered. Positions 1947–1957 (FPRPCPTPPVT) are enriched in pro residues.

This sequence belongs to the calcium channel alpha-1 subunit (TC 1.A.1.11) family. CACNA1C subfamily. In terms of assembly, component of a calcium channel complex consisting of a pore-forming alpha subunit (CACNA1C) and ancillary beta, gamma and delta subunits. The channel complex contains alpha, beta, gamma and delta subunits in a 1:1:1:1 ratio, i.e. it contains only one of each type of subunit. CACNA1C channel activity is modulated by ancillary subunits, such as CACNB1, CACNB2, CACNB3, CACNA2D1 and CACNA2D4. Interacts with the gamma subunits CACNG4, CACNG6, CACNG7 and CACNG8. Interacts with CACNB1. Interacts with CACNB2. Identified in a complex with CACNA2D4 and CACNB3. Interacts with CACNB3. Interacts with CACNA2D1. Interacts with CACNA2D4. Interacts with CALM1. Interacts (via the N-terminus and the C-terminal C and IQ motifs) with CABP1; this inhibits Ca(2+)-dependent channel inactivation. The binding via the C motif is calcium independent whereas the binding via IQ requires the presence of calcium and is mutually exclusive with calmodulin binding. The binding to the cytoplasmic N-terminal domain is calcium independent but is essential for the channel modulation. Interacts (via C-terminal CDB motif) with CABP5; in a calcium-dependent manner. Interacts with CIB1; the interaction increases upon cardiomyocytes hypertrophy. Interacts with STAC2 and STAC3; this inhibits channel inactivation. Post-translationally, phosphorylation by PKA at Ser-1897 activates the channel. Elevated levels of blood glucose lead to increased phosphorylation by PKA. In terms of tissue distribution, detected in embryonic heart. Detected in retina in rod bipolar cells. Detected in tibialis artery (at protein level). Detected in smooth muscle cells from tibialis artery and in mesenteric artery. High expression in heart, followed by brain and spinal cord.

It is found in the cell membrane. The protein localises to the sarcolemma. Its subcellular location is the perikaryon. It localises to the postsynaptic density membrane. The protein resides in the cell projection. It is found in the dendrite. The protein localises to the T-tubule. It catalyses the reaction Ca(2+)(in) = Ca(2+)(out). With respect to regulation, inhibited by dihydropyridines (DHP), such as isradipine. Inhibited by nifedipine. Channel activity is regulated by Ca(2+) and calmodulin. Binding of STAC1, STAC2 or STAC3 to a region that overlaps with the calmodulin binding site inhibits channel inactivation by Ca(2+) and calmodulin. Binding of calmodulin or CABP1 at the same regulatory sites results in opposite effects on the channel function. Shear stress and pressure increases calcium channel activity. Its function is as follows. Pore-forming, alpha-1C subunit of the voltage-gated calcium channel that gives rise to L-type calcium currents. Mediates influx of calcium ions into the cytoplasm, and thereby triggers calcium release from the sarcoplasm. Plays an important role in excitation-contraction coupling in the heart. Required for normal heart development and normal regulation of heart rhythm. Required for normal contraction of smooth muscle cells in blood vessels and in the intestine. Essential for normal blood pressure regulation via its role in the contraction of arterial smooth muscle cells. Long-lasting (L-type) calcium channels belong to the 'high-voltage activated' (HVA) group. This chain is Voltage-dependent L-type calcium channel subunit alpha-1C (Cacna1c), found in Mus musculus (Mouse).